Consider the following 392-residue polypeptide: Protein FAM53C (392 aa).

At Met1 the chain carries N-acetylmethionine. The disordered stretch occupies residues 77-120 (HLRPPSRGSSPKEQPLSQVLRPEPPDPEKLPVPPAPPSKRHCRS). The span at 83–93 (RGSSPKEQPLS) shows a compositional bias: polar residues. Residues Ser122 and Ser162 each carry the phosphoserine modification. Disordered stretches follow at residues 141-167 (LWTP…PKRV), 203-303 (SRPC…LDFD), and 340-364 (SASC…EGAV). Residues 203–215 (SRPCATSPQSGSW) show a composition bias toward polar residues. Phosphoserine occurs at positions 232, 234, 255, 273, and 299. The span at 241–256 (ASRFLPSARSSPASSP) shows a compositional bias: low complexity. The span at 278-303 (LDARKTGVKRRHEEDPRRLRPSLDFD) shows a compositional bias: basic and acidic residues.

It belongs to the FAM53 family.

In Pongo abelii (Sumatran orangutan), this protein is Protein FAM53C.